Here is a 152-residue protein sequence, read N- to C-terminus: Cytosolic calcium-binding protein 1 (152 aa).

7 repeat units span residues 57 to 62 (VEETEK), 67 to 71 (TEEAQ), 78 to 82 (VEIKK), 104 to 108 (VEAKK), 112 to 116 (VEEKK), 124 to 129 (VEEEKK), and 131 to 136 (EAEEEK). The 7 X 5 AA approximate repeats of V-E-E-K-K stretch occupies residues 57 to 136 (VEETEKPIEE…EKKPEAEEEK (80 aa)). Residues 60-152 (TEKPIEETEE…VTAPVEKADE (93 aa)) form a disordered region. The segment covering 96-138 (DESKTEEVVEAKKEEEVEEKKTEEAPVVVEEEKKPEAEEEKPA) has biased composition (basic and acidic residues).

As to expression, predominantly expressed in petioles (at protein level). Mainly observed in shoots, flowers, siliques and roots, and, to a lower extent, in stems and leaves.

The protein localises to the cytoplasm. It is found in the cytosol. Functionally, binds calcium Ca(2+) and may act as a signal mediator to buffer Ca(2+). The sequence is that of Cytosolic calcium-binding protein 1 from Arabidopsis thaliana (Mouse-ear cress).